We begin with the raw amino-acid sequence, 443 residues long: Signal recognition particle 54 kDa protein (443 aa).

Residues 107 to 114 (GVQGSGKT), 189 to 193 (DTAGR), and 247 to 250 (TKLD) each bind GTP.

This sequence belongs to the GTP-binding SRP family. SRP54 subfamily. Part of the signal recognition particle protein translocation system, which is composed of SRP and FtsY. Archaeal SRP consists of a 7S RNA molecule of 300 nucleotides and two protein subunits: SRP54 and SRP19.

Its subcellular location is the cytoplasm. The enzyme catalyses GTP + H2O = GDP + phosphate + H(+). Its function is as follows. Involved in targeting and insertion of nascent membrane proteins into the cytoplasmic membrane. Binds to the hydrophobic signal sequence of the ribosome-nascent chain (RNC) as it emerges from the ribosomes. The SRP-RNC complex is then targeted to the cytoplasmic membrane where it interacts with the SRP receptor FtsY. In Pyrococcus abyssi (strain GE5 / Orsay), this protein is Signal recognition particle 54 kDa protein.